A 146-amino-acid polypeptide reads, in one-letter code: Mitochondrial pyruvate carrier 3 (146 aa).

The N-terminal 20 residues, 1–20 (MSASAFNFAFRRFWNSETGP), are a transit peptide targeting the mitochondrion. Helical transmembrane passes span 23 to 39 (VHFW…FAGL), 55 to 71 (LSLL…SFVI), and 78 to 94 (LASV…YHLT).

This sequence belongs to the mitochondrial pyruvate carrier (MPC) (TC 2.A.105) family. As to quaternary structure, the functional 150 kDa pyruvate import complex is a heteromer of MPC1 and either MPC2 or MPC3.

The protein localises to the mitochondrion. It is found in the mitochondrion inner membrane. In terms of biological role, mediates the uptake of pyruvate into mitochondria. This Saccharomyces cerevisiae (strain ATCC 204508 / S288c) (Baker's yeast) protein is Mitochondrial pyruvate carrier 3.